Here is a 721-residue protein sequence, read N- to C-terminus: Vacuolar transporter chaperone complex subunit 4 (721 aa).

The region spanning methionine 1–alanine 146 is the SPX domain. The Cytoplasmic portion of the chain corresponds to methionine 1–tyrosine 631. Lysine 198, arginine 262, arginine 264, lysine 279, lysine 292, tyrosine 357, and arginine 359 together coordinate ATP. Glutamate 421 is a Mn(2+) binding site. Lysine 453 is a catalytic residue. 2 stretches are compositionally biased toward polar residues: residues glutamine 490–threonine 513 and isoleucine 529–phenylalanine 547. A disordered region spans residues glutamine 490–phenylalanine 547. A Phosphoserine modification is found at serine 495. Phosphothreonine is present on threonine 497. Phosphoserine is present on serine 501. At threonine 534 the chain carries Phosphothreonine. Position 546 is a phosphoserine (serine 546). The chain crosses the membrane as a helical span at residues leucine 632–alanine 652. Residues lysine 653 to glycine 657 lie on the Vacuolar side of the membrane. A helical membrane pass occupies residues isoleucine 658–leucine 678. Residues tyrosine 679–arginine 697 are Cytoplasmic-facing. Residues phenylalanine 698–asparagine 718 traverse the membrane as a helical segment. At phenylalanine 719–alanine 721 the chain is on the vacuolar side.

It belongs to the VTC4 family. In terms of assembly, the VTC core complex is an integral membrane heterooligomer composed of at least the catalytic subunit vtc4 and the accessory subunits vtc1 and vtc2. vtc1 is a small membrane protein without hydrophilic domain. Vtc2 and vtc4 are related and have 2 hydrophilic domains that face the cytosol, an N-terminal SPX domain and the central core domain. The central core in vtc4 is the catalytic domain. The cofactor is Mn(2+).

It is found in the vacuole membrane. The catalysed reaction is [phosphate](n) + ATP = [phosphate](n+1) + ADP. With respect to regulation, activity of the enzyme is Mn(2+)-dependent and enhanced in the presence of pyrophosphate (PPi). Functionally, catalytic subunit of the vacuolar transporter chaperone (VTC) complex. The VTC complex acts as a vacuolar polyphosphate polymerase that catalyzes the synthesis of inorganic polyphosphate (polyP) via transfer of phosphate from ATP to a growing polyP chain, releasing ADP. VTC exposes its catalytic domain vtc4 to the cytosol, where the growing polyP chain winds through a tunnel-shaped pocket, integrating cytoplasmic polymer synthesis with polyP membrane translocation. The VTC complex carries 9 vacuolar transmembrane domains, which are likely to constitute the translocation channel into the organelle lumen. PolyP synthesis is tightly coupled to its transport into the vacuole lumen, in order to avoid otherwise toxic intermediates in the cytosol, and it depends on the proton gradient across the membrane, formed by V-ATPase. The VTC complex also plays a role in vacuolar membrane fusion. In Schizosaccharomyces pombe (strain 972 / ATCC 24843) (Fission yeast), this protein is Vacuolar transporter chaperone complex subunit 4 (vtc4).